Consider the following 284-residue polypeptide: Bifunctional protein FolD (284 aa).

Residues 165–167 and Ser190 each bind NADP(+); that span reads GRS.

The protein belongs to the tetrahydrofolate dehydrogenase/cyclohydrolase family. In terms of assembly, homodimer.

The catalysed reaction is (6R)-5,10-methylene-5,6,7,8-tetrahydrofolate + NADP(+) = (6R)-5,10-methenyltetrahydrofolate + NADPH. The enzyme catalyses (6R)-5,10-methenyltetrahydrofolate + H2O = (6R)-10-formyltetrahydrofolate + H(+). The protein operates within one-carbon metabolism; tetrahydrofolate interconversion. Functionally, catalyzes the oxidation of 5,10-methylenetetrahydrofolate to 5,10-methenyltetrahydrofolate and then the hydrolysis of 5,10-methenyltetrahydrofolate to 10-formyltetrahydrofolate. This Streptococcus pyogenes serotype M28 (strain MGAS6180) protein is Bifunctional protein FolD.